A 632-amino-acid polypeptide reads, in one-letter code: Probable potassium transport system protein Kup (632 aa).

12 helical membrane passes run 17 to 37 (LFYLTLGSIGVVYGDIGTSPL), 60 to 80 (LISLMIWALTIIVTIKYVLFL), 106 to 126 (TAILMLLGLLGAALFLGDAMI), 146 to 166 (LSEYIVPISVVILALLFVVQS), 175 to 195 (FFGPITAVWFLVMAAAGISHI), 210 to 230 (AVSFLLHEGFYGVVVLGAVFL), 254 to 274 (WFLLVFPSLTLNYLGQGALVL), 292 to 312 (ALLPVVILATAATIIASQAVI), 344 to 364 (IFVPSVNAVLFIGVIFLVLSF), 370 to 390 (LATAYGISVTGAMVVTSIMAF), 401 to 421 (LPVAVIALAPLVILELIFLGA), and 426 to 446 (IHDGGYIPILIATAFTVIMWT).

This sequence belongs to the HAK/KUP transporter (TC 2.A.72) family.

It is found in the cell inner membrane. The catalysed reaction is K(+)(in) + H(+)(in) = K(+)(out) + H(+)(out). Transport of potassium into the cell. Likely operates as a K(+):H(+) symporter. This is Probable potassium transport system protein Kup from Rhizobium rhizogenes (Agrobacterium rhizogenes).